The primary structure comprises 1300 residues: Kinesin-like protein KIN-4C (1300 aa).

A Kinesin motor domain is found at 6–360; the sequence is CVRVAVNIRP…LKYANRARNI (355 aa). Position 85–92 (85–92) interacts with ATP; it reads GQTGSGKT. 3 coiled-coil regions span residues 580–615, 653–697, and 781–823; these read TSVLKQHYEKKVYDLEQEKRALQREIEGLRHNLASI, QLMR…RAWK, and EVTV…AKIS. 2 stretches are compositionally biased toward basic and acidic residues: residues 956 to 971 and 1001 to 1013; these read ADENLKNEHSMKKQET and EWKPEHESERESE. Disordered stretches follow at residues 956-1018, 1097-1132, 1144-1187, and 1200-1300; these read ADEN…ESVI, NADGKENNSISESEALENGENSQESDEKDKGQQQQV, ALAD…RKKW, and PALP…TRRV. 4 stretches are compositionally biased toward polar residues: residues 1169 to 1180, 1205 to 1222, 1230 to 1239, and 1275 to 1288; these read IGNTTGKSNVPR, THTNTHLIPEANSVTVDS, NSDSGESNSI, and GFVQSNSGRASGSR. The span at 1289 to 1300 shows a compositional bias: basic and acidic residues; the sequence is TSDEKENHTRRV.

The protein belongs to the TRAFAC class myosin-kinesin ATPase superfamily. Kinesin family. KIN-4 subfamily. Homodimer.

Kinesin-like motor protein involved in the control of the oriented deposition of cellulose microfibrils. The polypeptide is Kinesin-like protein KIN-4C (Arabidopsis thaliana (Mouse-ear cress)).